The sequence spans 51 residues: Large ribosomal subunit protein eL39 (51 aa).

The protein belongs to the eukaryotic ribosomal protein eL39 family.

The sequence is that of Large ribosomal subunit protein eL39 from Staphylothermus marinus (strain ATCC 43588 / DSM 3639 / JCM 9404 / F1).